Consider the following 268-residue polypeptide: Indole-3-glycerol phosphate synthase (268 aa).

The protein belongs to the TrpC family.

It carries out the reaction 1-(2-carboxyphenylamino)-1-deoxy-D-ribulose 5-phosphate + H(+) = (1S,2R)-1-C-(indol-3-yl)glycerol 3-phosphate + CO2 + H2O. It functions in the pathway amino-acid biosynthesis; L-tryptophan biosynthesis; L-tryptophan from chorismate: step 4/5. This Micrococcus luteus (strain ATCC 4698 / DSM 20030 / JCM 1464 / CCM 169 / CCUG 5858 / IAM 1056 / NBRC 3333 / NCIMB 9278 / NCTC 2665 / VKM Ac-2230) (Micrococcus lysodeikticus) protein is Indole-3-glycerol phosphate synthase.